Consider the following 145-residue polypeptide: Basic phospholipase A2 PC16 (145 aa).

A signal peptide spans 1 to 21 (MYPAHLLLLLAVCVSLLGASA). A propeptide spanning residues 22 to 27 (IPPLPL) is cleaved from the precursor. 7 cysteine pairs are disulfide-bonded: Cys38–Cys98, Cys54–Cys144, Cys56–Cys72, Cys71–Cys125, Cys78–Cys118, Cys87–Cys111, and Cys105–Cys116. Tyr55, Gly57, and Gly59 together coordinate Ca(2+). His75 is an active-site residue. Asp76 contributes to the Ca(2+) binding site. Residue Asp119 is part of the active site.

The protein belongs to the phospholipase A2 family. Group I subfamily. D49 sub-subfamily. The cofactor is Ca(2+).

It is found in the secreted. The enzyme catalyses a 1,2-diacyl-sn-glycero-3-phosphocholine + H2O = a 1-acyl-sn-glycero-3-phosphocholine + a fatty acid + H(+). Its function is as follows. PLA2 catalyzes the calcium-dependent hydrolysis of the 2-acyl groups in 3-sn-phosphoglycerides. This is Basic phospholipase A2 PC16 from Laticauda laticaudata (Blue-ringed sea krait).